Here is a 425-residue protein sequence, read N- to C-terminus: UDP-N-acetylglucosamine 1-carboxyvinyltransferase (425 aa).

Residue 23–24 (KN) participates in phosphoenolpyruvate binding. Arg-100 contacts UDP-N-acetyl-alpha-D-glucosamine. Cys-124 serves as the catalytic Proton donor. Position 124 is a 2-(S-cysteinyl)pyruvic acid O-phosphothioketal (Cys-124). The UDP-N-acetyl-alpha-D-glucosamine site is built by Asp-313 and Ile-335.

This sequence belongs to the EPSP synthase family. MurA subfamily.

The protein localises to the cytoplasm. It catalyses the reaction phosphoenolpyruvate + UDP-N-acetyl-alpha-D-glucosamine = UDP-N-acetyl-3-O-(1-carboxyvinyl)-alpha-D-glucosamine + phosphate. It participates in cell wall biogenesis; peptidoglycan biosynthesis. Functionally, cell wall formation. Adds enolpyruvyl to UDP-N-acetylglucosamine. The chain is UDP-N-acetylglucosamine 1-carboxyvinyltransferase from Wolbachia sp. subsp. Brugia malayi (strain TRS).